Reading from the N-terminus, the 399-residue chain is S-adenosylmethionine synthase (399 aa).

Residue His-16 coordinates ATP. Asp-18 is a Mg(2+) binding site. Residue Glu-44 coordinates K(+). L-methionine is bound by residues Glu-57 and Gln-100. The tract at residues 100–110 (QSPDIAQGVDT) is flexible loop. ATP-binding positions include 175-177 (DGK), 246-247 (KF), Asp-255, 261-262 (RK), Ala-278, and Lys-282. Asp-255 contributes to the L-methionine binding site. Lys-286 contributes to the L-methionine binding site. An Isoglutamyl lysine isopeptide (Lys-Gln) (interchain with Q-Cter in protein Pup) cross-link involves residue Lys-341.

Belongs to the AdoMet synthase family. In terms of assembly, homotetramer; dimer of dimers. Mg(2+) is required as a cofactor. It depends on K(+) as a cofactor.

The protein resides in the cytoplasm. It carries out the reaction L-methionine + ATP + H2O = S-adenosyl-L-methionine + phosphate + diphosphate. It functions in the pathway amino-acid biosynthesis; S-adenosyl-L-methionine biosynthesis; S-adenosyl-L-methionine from L-methionine: step 1/1. Functionally, catalyzes the formation of S-adenosylmethionine (AdoMet) from methionine and ATP. The overall synthetic reaction is composed of two sequential steps, AdoMet formation and the subsequent tripolyphosphate hydrolysis which occurs prior to release of AdoMet from the enzyme. This is S-adenosylmethionine synthase from Mycolicibacterium smegmatis (strain ATCC 700084 / mc(2)155) (Mycobacterium smegmatis).